A 129-amino-acid polypeptide reads, in one-letter code: Small ribosomal subunit protein uS11 (129 aa).

This sequence belongs to the universal ribosomal protein uS11 family. As to quaternary structure, part of the 30S ribosomal subunit. Interacts with proteins S7 and S18. Binds to IF-3.

Functionally, located on the platform of the 30S subunit, it bridges several disparate RNA helices of the 16S rRNA. Forms part of the Shine-Dalgarno cleft in the 70S ribosome. The polypeptide is Small ribosomal subunit protein uS11 (Staphylococcus epidermidis (strain ATCC 12228 / FDA PCI 1200)).